The chain runs to 94 residues: Integration host factor subunit beta (94 aa).

This sequence belongs to the bacterial histone-like protein family. In terms of assembly, heterodimer of an alpha and a beta chain.

Its function is as follows. This protein is one of the two subunits of integration host factor, a specific DNA-binding protein that functions in genetic recombination as well as in transcriptional and translational control. The polypeptide is Integration host factor subunit beta (Escherichia coli (strain UTI89 / UPEC)).